Here is a 72-residue protein sequence, read N- to C-terminus: Translation initiation factor IF-1 (72 aa).

Residues methionine 1–lysine 72 enclose the S1-like domain.

It belongs to the IF-1 family. As to quaternary structure, component of the 30S ribosomal translation pre-initiation complex which assembles on the 30S ribosome in the order IF-2 and IF-3, IF-1 and N-formylmethionyl-tRNA(fMet); mRNA recruitment can occur at any time during PIC assembly.

It localises to the cytoplasm. In terms of biological role, one of the essential components for the initiation of protein synthesis. Stabilizes the binding of IF-2 and IF-3 on the 30S subunit to which N-formylmethionyl-tRNA(fMet) subsequently binds. Helps modulate mRNA selection, yielding the 30S pre-initiation complex (PIC). Upon addition of the 50S ribosomal subunit IF-1, IF-2 and IF-3 are released leaving the mature 70S translation initiation complex. The protein is Translation initiation factor IF-1 of Chlorobium luteolum (strain DSM 273 / BCRC 81028 / 2530) (Pelodictyon luteolum).